The primary structure comprises 636 residues: 1-deoxy-D-xylulose-5-phosphate synthase (636 aa).

Thiamine diphosphate contacts are provided by residues His-72 and 113 to 115 (GHA). Position 144 (Asp-144) interacts with Mg(2+). Thiamine diphosphate contacts are provided by residues 145 to 146 (GA), Asn-174, Tyr-287, and Glu-370. Asn-174 contacts Mg(2+).

Belongs to the transketolase family. DXPS subfamily. Homodimer. Requires Mg(2+) as cofactor. It depends on thiamine diphosphate as a cofactor.

The enzyme catalyses D-glyceraldehyde 3-phosphate + pyruvate + H(+) = 1-deoxy-D-xylulose 5-phosphate + CO2. It participates in metabolic intermediate biosynthesis; 1-deoxy-D-xylulose 5-phosphate biosynthesis; 1-deoxy-D-xylulose 5-phosphate from D-glyceraldehyde 3-phosphate and pyruvate: step 1/1. In terms of biological role, catalyzes the acyloin condensation reaction between C atoms 2 and 3 of pyruvate and glyceraldehyde 3-phosphate to yield 1-deoxy-D-xylulose-5-phosphate (DXP). The protein is 1-deoxy-D-xylulose-5-phosphate synthase of Rippkaea orientalis (strain PCC 8801 / RF-1) (Cyanothece sp. (strain PCC 8801)).